Here is a 211-residue protein sequence, read N- to C-terminus: Uracil phosphoribosyltransferase (211 aa).

5-phospho-alpha-D-ribose 1-diphosphate is bound by residues Arg79, Arg104, and 131 to 139 (DPMLATGGS). Residues Ile196 and 201-203 (GDA) each bind uracil. Residue Asp202 participates in 5-phospho-alpha-D-ribose 1-diphosphate binding.

This sequence belongs to the UPRTase family. Mg(2+) is required as a cofactor.

The catalysed reaction is UMP + diphosphate = 5-phospho-alpha-D-ribose 1-diphosphate + uracil. The protein operates within pyrimidine metabolism; UMP biosynthesis via salvage pathway; UMP from uracil: step 1/1. Its activity is regulated as follows. Allosterically activated by GTP. Functionally, catalyzes the conversion of uracil and 5-phospho-alpha-D-ribose 1-diphosphate (PRPP) to UMP and diphosphate. The protein is Uracil phosphoribosyltransferase of Limosilactobacillus reuteri (strain DSM 20016) (Lactobacillus reuteri).